Reading from the N-terminus, the 361-residue chain is Palmitoyltransferase ZDHHC16 (361 aa).

Over 1–77 the chain is Cytoplasmic; it reads MRGQRSLLLG…VYWLVDNVIR (77 aa). A helical membrane pass occupies residues 78 to 98; the sequence is WFGVVFVVLVIVLTGSIVAIA. Residues 99–116 are Lumenal-facing; sequence YLCVLPLILRTYSVPRLC. The helical transmembrane segment at 117-137 threads the bilayer; that stretch reads WHFFYSHWNLILIVFHYYQAI. The Cytoplasmic portion of the chain corresponds to 138–198; it reads TTPPGYPPQG…NNCVGHYNHR (61 aa). The DHHC domain occupies 155–205; it reads SICKKCIYPKPARTHHCSICNRCVLKMDHHCPWLNNCVGHYNHRYFFSFCF. Catalysis depends on cysteine 185, which acts as the S-palmitoyl cysteine intermediate. Residues 199–219 form a helical membrane-spanning segment; it reads YFFSFCFFMTLGCVYCSYGSW. At 220–250 the chain is on the lumenal side; the sequence is DLFREAYAAIETYHQTPPPTFSFRERITHKS. Residues 251 to 271 form a helical membrane-spanning segment; sequence LVYLWFLCSSVALALGALTMW. Over 272-361 the chain is Cytoplasmic; it reads HAVLISRGET…TAHSASVMAV (90 aa).

This sequence belongs to the DHHC palmitoyltransferase family. In terms of assembly, interacts with ABL1. Interacts with COPS5. In terms of tissue distribution, ubiquitously expressed.

The protein localises to the endoplasmic reticulum membrane. It carries out the reaction L-cysteinyl-[protein] + hexadecanoyl-CoA = S-hexadecanoyl-L-cysteinyl-[protein] + CoA. Its function is as follows. Palmitoyl acyltransferase that mediates palmitoylation of proteins such as PLN and ZDHHC6. Required during embryonic heart development and cardiac function, possibly by mediating palmitoylation of PLN, thereby affecting PLN phosphorylation and homooligomerization. Also required for eye development. Palmitoylates ZDHHC6, affecting the quaternary assembly of ZDHHC6, its localization, stability and function. May play a role in DNA damage response. May be involved in apoptosis regulation. Involved in the proliferation of neural stem cells by regulating the FGF/ERK pathway. The polypeptide is Palmitoyltransferase ZDHHC16 (Mus musculus (Mouse)).